The chain runs to 293 residues: Eukaryotic translation initiation factor 3 subunit F (293 aa).

N-acetylalanine is present on alanine 2. The MPN domain maps to 28–159 (ARIHPLVIFN…IKAFVSSNLS (132 aa)).

This sequence belongs to the eIF-3 subunit F family. As to quaternary structure, component of the eukaryotic translation initiation factor 3 (eIF-3) complex. Binds to TIF3E1 and TIF3H1. In terms of tissue distribution, expressed in inflorescences, leaves, stems, siliques, roots and seedlings. Accumulates at highly levels in pollen grains, developing embryos and root tips.

The protein localises to the cytoplasm. Functionally, component of the eukaryotic translation initiation factor 3 (eIF-3) complex, which is involved in protein synthesis of a specialized repertoire of mRNAs and, together with other initiation factors, stimulates binding of mRNA and methionyl-tRNAi to the 40S ribosome. The eIF-3 complex specifically targets and initiates translation of a subset of mRNAs involved in cell proliferation (Potential). Involved in cell growth and differentiation, especially during embryogenesis and male gametophyte germination. Regulates sensitivity to sugars (e.g. sucrose). This chain is Eukaryotic translation initiation factor 3 subunit F (TIF3F1), found in Arabidopsis thaliana (Mouse-ear cress).